The sequence spans 606 residues: Zinc finger protein 214 (606 aa).

The KRAB domain occupies 3–83 (VTFEDVTIIF…GAQMYENQNY (81 aa)). The C2H2-type 1; degenerate zinc finger occupies 275-297 (YGCDEVDGNFHQSSGVHFHQRVH). The C2H2-type 2 zinc-finger motif lies at 303–325 (YSCNACGKSFSQISSLHNHQRVH). Residues 330-352 (FYKIECDKDLSRNSLLHIHQRLH) form a C2H2-type 3; degenerate zinc finger. 8 consecutive C2H2-type zinc fingers follow at residues 358 to 380 (FKCN…QRVH), 386 to 408 (YKCD…QLVH), 414 to 436 (YKCE…QRVH), 442 to 464 (YKCD…QRVH), 470 to 492 (YTCP…QRVH), 498 to 520 (YKCE…QRVH), 526 to 548 (YKCH…QRVH), and 554 to 576 (YQCA…QRVH).

The protein belongs to the krueppel C2H2-type zinc-finger protein family.

It localises to the nucleus. In terms of biological role, may be involved in transcriptional regulation. The sequence is that of Zinc finger protein 214 (ZNF214) from Homo sapiens (Human).